Here is a 470-residue protein sequence, read N- to C-terminus: 5-hydroxytryptamine receptor 2A (470 aa).

Residues M1–L80 are Extracellular-facing. 6 N-linked (GlcNAc...) asparagine glycosylation sites follow: N8, N38, N44, N51, N54, and N75. Residues T81–M97 form a helical membrane-spanning segment. Residues A98 to Y111 lie on the Cytoplasmic side of the membrane. The helical transmembrane segment at F112–Y137 threads the bilayer. The Extracellular portion of the chain corresponds to G138–K146. A helical membrane pass occupies residues L147 to L171. C148 and C227 are oxidised to a cystine. Position 155 (D155) interacts with serotonin. The DRY motif; important for ligand-induced conformation changes signature appears at D172–Y174. The Cytoplasmic portion of the chain corresponds to D172–K191. A helical membrane pass occupies residues A192–L215. The Extracellular segment spans residues Q216–D232. The helical transmembrane segment at N233 to I258 threads the bilayer. Over K259–C321 the chain is Cytoplasmic. S280 bears the Phosphoserine mark. The helical transmembrane segment at K322–I347 threads the bilayer. N342 is a binding site for serotonin. C348 and C352 are disulfide-bonded. The Extracellular segment spans residues C348–D355. Residues V356–L381 traverse the membrane as a helical segment. Positions N375–Y379 match the NPxxY motif; important for ligand-induced conformation changes and signaling motif. The Cytoplasmic portion of the chain corresponds to F382–V470. Residues G448 to V470 are disordered. Residues D458 to V470 are compositionally biased toward polar residues. Positions S468–V470 match the PDZ-binding motif.

It belongs to the G-protein coupled receptor 1 family. Interacts (via C-terminus) with MPDZ and PATJ. May interact (via C-terminus) with MPP3, PRDX6, DLG4, DLG1, CASK, APBA1 and MAGI2. Interacts with GRM2 and DRD2; this may affect signaling.

The protein localises to the cell membrane. It localises to the cell projection. It is found in the dendrite. Its subcellular location is the axon. The protein resides in the cytoplasmic vesicle. The protein localises to the membrane. It localises to the caveola. It is found in the presynapse. With respect to regulation, G-protein coupled receptor activity is regulated by lipids: oleamide increases HTR2A-mediated activity. Its function is as follows. G-protein coupled receptor for 5-hydroxytryptamine (serotonin). Also functions as a receptor for various drugs and psychoactive substances, including mescaline, psilocybin, 1-(2,5-dimethoxy-4-iodophenyl)-2-aminopropane (DOI) and lysergic acid diethylamide (LSD). Ligand binding causes a conformation change that triggers signaling via guanine nucleotide-binding proteins (G proteins) and modulates the activity of downstream effectors. HTR2A is coupled to G(q)/G(11) G alpha proteins and activates phospholipase C-beta, releasing diacylglycerol (DAG) and inositol 1,4,5-trisphosphate (IP3) second messengers that modulate the activity of phosphatidylinositol 3-kinase and promote the release of Ca(2+) ions from intracellular stores, respectively. Beta-arrestin family members inhibit signaling via G proteins and mediate activation of alternative signaling pathways. Affects neural activity, perception, cognition and mood. Plays a role in the regulation of behavior, including responses to anxiogenic situations and psychoactive substances. Plays a role in intestinal smooth muscle contraction, and may play a role in arterial vasoconstriction. The chain is 5-hydroxytryptamine receptor 2A (HTR2A) from Sus scrofa (Pig).